Reading from the N-terminus, the 120-residue chain is Putative defensin-like protein 179 (120 aa).

The signal sequence occupies residues 1–27; sequence MERTSTSLLFLLSLLIIFASAVNQIRA. 7 cysteine pairs are disulfide-bonded: Cys-37–Cys-56, Cys-40–Cys-63, Cys-44–Cys-65, Cys-74–Cys-120, Cys-85–Cys-105, Cys-90–Cys-114, and Cys-94–Cys-116.

It belongs to the DEFL family.

Its subcellular location is the secreted. In Arabidopsis thaliana (Mouse-ear cress), this protein is Putative defensin-like protein 179 (LCR57).